A 754-amino-acid chain; its full sequence is Elongation factor G-1, mitochondrial (754 aa).

The transit peptide at 1–17 (MARFPTSPAPNRLLRLF) directs the protein to the mitochondrion. One can recognise a tr-type G domain in the interval 63–340 (DKLRNIGISA…GVVSFLPSPN (278 aa)). GTP-binding positions include 72–79 (AHIDSGKT), 139–143 (DTPGH), and 193–196 (NKLD).

The protein belongs to the TRAFAC class translation factor GTPase superfamily. Classic translation factor GTPase family. EF-G/EF-2 subfamily. Expressed in cotyledons and adult leaves at the same levels.

It localises to the mitochondrion. It functions in the pathway protein biosynthesis; polypeptide chain elongation. Functionally, mitochondrial GTPase that catalyzes the GTP-dependent ribosomal translocation step during translation elongation. During this step, the ribosome changes from the pre-translocational (PRE) to the post-translocational (POST) state as the newly formed A-site-bound peptidyl-tRNA and P-site-bound deacylated tRNA move to the P and E sites, respectively. Catalyzes the coordinated movement of the two tRNA molecules, the mRNA and conformational changes in the ribosome. The sequence is that of Elongation factor G-1, mitochondrial (MEFG1) from Arabidopsis thaliana (Mouse-ear cress).